An 807-amino-acid chain; its full sequence is Phenylalanine--tRNA ligase beta subunit (807 aa).

One can recognise a tRNA-binding domain in the interval 39–153; the sequence is SARSQGVVVG…EIPAVGTPVA (115 aa). In terms of domain architecture, B5 spans 407–491; that stretch reads RTPVPLQLRR…RLVGFDKFGS (85 aa). Positions 469, 475, 478, and 479 each coordinate Mg(2+). The FDX-ACB domain occupies 713-806; the sequence is PTVPASERDL…LSKQFKAELR (94 aa).

Belongs to the phenylalanyl-tRNA synthetase beta subunit family. Type 1 subfamily. Tetramer of two alpha and two beta subunits. Mg(2+) serves as cofactor.

It localises to the cytoplasm. It catalyses the reaction tRNA(Phe) + L-phenylalanine + ATP = L-phenylalanyl-tRNA(Phe) + AMP + diphosphate + H(+). The sequence is that of Phenylalanine--tRNA ligase beta subunit from Synechococcus sp. (strain CC9902).